The primary structure comprises 340 residues: Putative pyridoxal kinase C18.10 (340 aa).

Residues Ser19 and Tyr130 each coordinate substrate. ATP-binding positions include Thr189–Ser190 and Gln218–Gly230. Asp231 contributes to the substrate binding site.

Belongs to the pyridoxine kinase family. The cofactor is a divalent metal cation.

It is found in the cytoplasm. The protein resides in the nucleus. It carries out the reaction pyridoxal + ATP = pyridoxal 5'-phosphate + ADP + H(+). Required for synthesis of pyridoxal-5-phosphate from vitamin B6. This is Putative pyridoxal kinase C18.10 from Schizosaccharomyces pombe (strain 972 / ATCC 24843) (Fission yeast).